We begin with the raw amino-acid sequence, 606 residues long: WD repeat-containing protein 1 (606 aa).

WD repeat units follow at residues 4–45, 48–87, 93–135, 138–176, 180–218, 224–263, 270–306, 311–351, 358–408, 432–474, 480–518, 523–561, and 566–604; these read EIKK…LRNI, PAIADIYTEHAHQVVVAKYAPSGFYIASGDISGKLRIWDT, LLKY…LWDT, SVGEITGHNKVINSVDIKQTRPYRLATGSDDNCAAFFEG, KFKFTIGDHSRFVNCVRFSPDGNRFATASADGQIFIYDG, VCALGESKAHDGGIYAISWSPDSTHLLSASGDKTSKIWDV, STFPMGSNVLDQQLGCLWQKDHLLSISLSGYINYLDK, KPLR…YWDS, SFSG…KLDV, LKDQ…VYSI, KDEGKLLEAKGPVTDVAYSHDGAFLAVCDASKVVTVFSV, SENNVFYGHHAKIVCLAWSPDNEHFASGGMDMMVYVWTL, and TKVKIQDAHRLHHVSSLAWLDEHTLVTTSHDASVKEWTI. 4 positions are modified to N6-acetyllysine: lysine 28, lysine 81, lysine 95, and lysine 115. Position 238 is a phosphotyrosine (tyrosine 238). Lysine 480 carries the post-translational modification N6-acetyllysine.

This sequence belongs to the WD repeat AIP1 family.

It is found in the cytoplasm. Its subcellular location is the cytoskeleton. The protein localises to the cell projection. The protein resides in the podosome. In terms of biological role, induces disassembly of actin filaments in conjunction with ADF/cofilin family proteins. Enhances cofilin-mediated actin severing. Involved in cytokinesis. Involved in chemotactic cell migration by restricting lamellipodial membrane protrusions. Involved in myocardium sarcomere organization. Required for cardiomyocyte growth at the postnatal and maintenance at the adult stage. Involved in neutrophil actin dynamics and migration. Involved in megakaryocyte maturation and platelet shedding. Required for the establishment of planar cell polarity (PCP) during follicular epithelium development and for cell shape changes during PCP; the function seems to implicate cooperation with CFL1 and/or DSTN/ADF. Involved in the generation/maintenance of cortical tension. Involved in assembly and maintenance of epithelial apical cell junctions and plays a role in the organization of the perijunctional actomyosin belt. This chain is WD repeat-containing protein 1 (Wdr1), found in Mus musculus (Mouse).